A 452-amino-acid chain; its full sequence is Phosphoglucosamine mutase (452 aa).

S109 acts as the Phosphoserine intermediate in catalysis. Mg(2+) contacts are provided by S109, D248, D250, and D252. A Phosphoserine modification is found at S109.

Belongs to the phosphohexose mutase family. Requires Mg(2+) as cofactor. Post-translationally, activated by phosphorylation.

It carries out the reaction alpha-D-glucosamine 1-phosphate = D-glucosamine 6-phosphate. In terms of biological role, catalyzes the conversion of glucosamine-6-phosphate to glucosamine-1-phosphate. This is Phosphoglucosamine mutase from Erythrobacter litoralis (strain HTCC2594).